The following is a 546-amino-acid chain: Chaperonin GroEL (546 aa).

ATP is bound by residues 30–33 (TLGP), K51, 87–91 (DGTTT), G415, 479–481 (NAA), and D495.

This sequence belongs to the chaperonin (HSP60) family. In terms of assembly, forms a cylinder of 14 subunits composed of two heptameric rings stacked back-to-back. Interacts with the co-chaperonin GroES.

Its subcellular location is the cytoplasm. It carries out the reaction ATP + H2O + a folded polypeptide = ADP + phosphate + an unfolded polypeptide.. Functionally, together with its co-chaperonin GroES, plays an essential role in assisting protein folding. The GroEL-GroES system forms a nano-cage that allows encapsulation of the non-native substrate proteins and provides a physical environment optimized to promote and accelerate protein folding. In Xanthomonas axonopodis pv. citri (strain 306), this protein is Chaperonin GroEL.